Here is a 324-residue protein sequence, read N- to C-terminus: HTH-type transcriptional regulator CysB (324 aa).

The HTH lysR-type domain occupies 1 to 59; the sequence is MKLQQLRYIVEVVNHNLNVSSTAEGLYTSQPGISKQVRMLEDELGIQIFSRSGKHLTQV. The H-T-H motif DNA-binding region spans 19–38; that stretch reads VSSTAEGLYTSQPGISKQVR.

Belongs to the LysR transcriptional regulatory family. As to quaternary structure, homotetramer.

The protein localises to the cytoplasm. In terms of biological role, this protein is a positive regulator of gene expression for the cysteine regulon. The inducer for CysB is N-acetylserine. The sequence is that of HTH-type transcriptional regulator CysB (cysB) from Escherichia coli O157:H7.